A 332-amino-acid polypeptide reads, in one-letter code: Very-long-chain 3-oxoacyl-CoA reductase (332 aa).

A helical membrane pass occupies residues 15 to 35; it reads GQWALAGIGALYVATRVGAFL. NADP(+)-binding residues include Val60, Asp115, Asp123, Asn142, Lys177, Tyr209, Lys213, Val242, and Thr244. The active-site Proton donor is Tyr209. Residue Lys213 is the Lowers pKa of active site Tyr of the active site.

This sequence belongs to the short-chain dehydrogenases/reductases (SDR) family.

It is found in the endoplasmic reticulum membrane. The catalysed reaction is a very-long-chain (3R)-3-hydroxyacyl-CoA + NADP(+) = a very-long-chain 3-oxoacyl-CoA + NADPH + H(+). The protein operates within lipid metabolism; fatty acid biosynthesis. Component of the microsomal membrane bound fatty acid elongation system, which produces the 26-carbon very long-chain fatty acids (VLCFA) from palmitate. Catalyzes the reduction of the 3-ketoacyl-CoA intermediate that is formed in each cycle of fatty acid elongation. VLCFAs serve as precursors for ceramide and sphingolipids. This Neurospora crassa (strain ATCC 24698 / 74-OR23-1A / CBS 708.71 / DSM 1257 / FGSC 987) protein is Very-long-chain 3-oxoacyl-CoA reductase.